Here is a 370-residue protein sequence, read N- to C-terminus: (5-formylfuran-3-yl)methyl phosphate transaminase (370 aa).

The residue at position 222 (lysine 222) is an N6-(pyridoxal phosphate)lysine.

Belongs to the class-I pyridoxal-phosphate-dependent aminotransferase family. In terms of assembly, homodimer. The cofactor is pyridoxal 5'-phosphate.

The protein resides in the cytoplasm. The enzyme catalyses 4-(hydroxymethyl)-2-furancarboxaldehyde phosphate + L-alanine = [5-(aminomethyl)-3-furyl]methyl phosphate + pyruvate. The protein operates within cofactor biosynthesis; methanofuran biosynthesis. In terms of biological role, catalyzes the transamination reaction between 4-(hydroxymethyl)-2-furancarboxaldehyde phosphate (4-HFC-P) and alanine to produce pyruvate and 5-(aminomethyl)-3-furanmethanol phosphate (F1-P), the precursor for the furan moiety in methanofuran. The protein is (5-formylfuran-3-yl)methyl phosphate transaminase of Methanocaldococcus jannaschii (strain ATCC 43067 / DSM 2661 / JAL-1 / JCM 10045 / NBRC 100440) (Methanococcus jannaschii).